The sequence spans 190 residues: ATP synthase subunit delta (190 aa).

This sequence belongs to the ATPase delta chain family. F-type ATPases have 2 components, F(1) - the catalytic core - and F(0) - the membrane proton channel. F(1) has five subunits: alpha(3), beta(3), gamma(1), delta(1), epsilon(1). F(0) has three main subunits: a(1), b(2) and c(10-14). The alpha and beta chains form an alternating ring which encloses part of the gamma chain. F(1) is attached to F(0) by a central stalk formed by the gamma and epsilon chains, while a peripheral stalk is formed by the delta and b chains.

The protein localises to the cell inner membrane. Functionally, f(1)F(0) ATP synthase produces ATP from ADP in the presence of a proton or sodium gradient. F-type ATPases consist of two structural domains, F(1) containing the extramembraneous catalytic core and F(0) containing the membrane proton channel, linked together by a central stalk and a peripheral stalk. During catalysis, ATP synthesis in the catalytic domain of F(1) is coupled via a rotary mechanism of the central stalk subunits to proton translocation. Its function is as follows. This protein is part of the stalk that links CF(0) to CF(1). It either transmits conformational changes from CF(0) to CF(1) or is implicated in proton conduction. In Beijerinckia indica subsp. indica (strain ATCC 9039 / DSM 1715 / NCIMB 8712), this protein is ATP synthase subunit delta.